A 328-amino-acid chain; its full sequence is Phosphate acyltransferase (328 aa).

It belongs to the PlsX family. As to quaternary structure, homodimer. Probably interacts with PlsY.

Its subcellular location is the cytoplasm. The enzyme catalyses a fatty acyl-[ACP] + phosphate = an acyl phosphate + holo-[ACP]. It functions in the pathway lipid metabolism; phospholipid metabolism. In terms of biological role, catalyzes the reversible formation of acyl-phosphate (acyl-PO(4)) from acyl-[acyl-carrier-protein] (acyl-ACP). This enzyme utilizes acyl-ACP as fatty acyl donor, but not acyl-CoA. This Staphylococcus aureus (strain MSSA476) protein is Phosphate acyltransferase.